We begin with the raw amino-acid sequence, 159 residues long: MRCPKCQHNKSNVIDSRQAEDGNTIRRRRECDACHARFTTFERVEEVPLLVVKKDGTREQFSRDKIFNGISMSAQKRPVSSEDIENAITRIEKNIRRNHDGEVDSEVIGNLVMKELADLDEITYVRFASVYRSFKDVDEIEELLQEITKTVRAKKESKK.

Positions Met1–Asp21 are disordered. A zinc finger spans residues Cys3–Cys34. Positions Leu49–Glu139 constitute an ATP-cone domain.

This sequence belongs to the NrdR family. It depends on Zn(2+) as a cofactor.

In terms of biological role, negatively regulates transcription of bacterial ribonucleotide reductase nrd genes and operons by binding to NrdR-boxes. The polypeptide is Transcriptional repressor NrdR (Streptococcus thermophilus (strain ATCC BAA-491 / LMD-9)).